The following is a 358-amino-acid chain: Peptide chain release factor 1 (358 aa).

Glutamine 237 bears the N5-methylglutamine mark.

This sequence belongs to the prokaryotic/mitochondrial release factor family. In terms of processing, methylated by PrmC. Methylation increases the termination efficiency of RF1.

It is found in the cytoplasm. Functionally, peptide chain release factor 1 directs the termination of translation in response to the peptide chain termination codons UAG and UAA. The chain is Peptide chain release factor 1 from Mycoplasma mobile (strain ATCC 43663 / 163K / NCTC 11711) (Mesomycoplasma mobile).